The chain runs to 112 residues: MDLLFFDIGATLYGTDASQVLRIDRALPEDLTLAELGLPHRGNRAIVFDTPEGEAHLKVDAVHGVRSIPVNSLRRMPPTAGAAAYAVGVCLEEARTVLLIDLVETARTQGRH.

Its function is as follows. Necessary for proper aggregation of cells to form fruiting bodies. FRZ genes define a system of signal transduction analogous to the enterobacterial chemotaxis systems. In Myxococcus xanthus, this protein is Frizzy aggregation protein FrzB (frzB).